The primary structure comprises 396 residues: Probable sugar efflux transporter (396 aa).

A run of 12 helical transmembrane segments spans residues 15 to 35 (VVTL…PVGL), 50 to 70 (VGIM…PFML), 81 to 101 (LICL…SWSF), 103 to 123 (VLVI…SITA), 136 to 156 (AQAL…GLPL), 170 to 190 (FFAI…LLPL), 209 to 229 (PALM…YTAY), 246 to 266 (FATA…VIFG), 275 to 295 (ALVS…LPAA), 299 to 319 (IHLG…GLGM), 333 to 353 (VAMA…ALVG), and 364 to 384 (MIGY…IIIF).

Belongs to the major facilitator superfamily. SotB (TC 2.A.1.2) family.

The protein localises to the cell inner membrane. In terms of biological role, involved in the efflux of sugars. The physiological role may be the reduction of the intracellular concentration of toxic sugars or sugar metabolites. The polypeptide is Probable sugar efflux transporter (Shigella flexneri serotype 5b (strain 8401)).